A 621-amino-acid polypeptide reads, in one-letter code: MAU2 chromatid cohesion factor homolog (621 aa).

TPR repeat units follow at residues Phe-96–Asn-129, Gly-451–Glu-484, and Ser-491–Ile-524.

It belongs to the SCC4/mau-2 family. Interacts with Nipped-B to form the cohesin loading complex.

The protein resides in the nucleus. Its subcellular location is the nucleoplasm. In terms of biological role, required for association of the cohesin complex with chromatin during interphase. Plays a role in sister chromatid cohesion and normal progression through prometaphase. The chain is MAU2 chromatid cohesion factor homolog from Drosophila virilis (Fruit fly).